The primary structure comprises 419 residues: MGPLSAPPCTQRITWKGVLLTASLLNFWNPPTTAQVTIEAQPPKVSEGKDVLLLVHNLPQNLAGYIWYKGQMTYLYHYITSYVVDGQRIIYGPAYSGRERVYSNASLLIQNVTQEDAGSYTLHIIKRRDGTGGVTGHFTFTLHLETPKPSISSSNLNPREAMEAVILTCDPATPAASYQWWMNGQSLPMTHRLQLSKTNRTLFIFGVTKYIAGPYECEIRNPVSASRSDPVTLNLLPKLSKPYITINNLNPRENKDVLTFTCEPKSKNYTYIWWLNGQSLPVSPRVKRPIENRILILPNVTRNETGPYQCEIRDRYGGIRSDPVTLNVLYGPDLPSIYPSFTYYRSGENLYLSCFAESNPRAQYSWTINGKFQLSGQKLSIPQITTKHSGLYACSVRNSATGKESSKSITVKVSDWILP.

An N-terminal signal peptide occupies residues 1–34; the sequence is MGPLSAPPCTQRITWKGVLLTASLLNFWNPPTTA. Residues 35–144 form the Ig-like V-type domain; it reads QVTIEAQPPK…TGHFTFTLHL (110 aa). 6 N-linked (GlcNAc...) asparagine glycosylation sites follow: asparagine 104, asparagine 111, asparagine 199, asparagine 268, asparagine 299, and asparagine 303. 3 Ig-like C2-type domains span residues 147-234, 237-327, and 332-410; these read PKPS…VTLN, PKLS…VTLN, and PDLP…KSIT. Intrachain disulfides connect cysteine 169–cysteine 217, cysteine 262–cysteine 310, and cysteine 354–cysteine 394.

Belongs to the immunoglobulin superfamily. CEA family.

The protein localises to the secreted. The polypeptide is Pregnancy-specific beta-1-glycoprotein 4 (PSG4) (Homo sapiens (Human)).